Here is a 138-residue protein sequence, read N- to C-terminus: Large ribosomal subunit protein uL14 (138 aa).

It belongs to the universal ribosomal protein uL14 family. As to quaternary structure, part of the 50S ribosomal subunit. Forms a cluster with proteins L3 and L24e, part of which may contact the 16S rRNA in 2 intersubunit bridges.

Binds to 23S rRNA. Forms part of two intersubunit bridges in the 70S ribosome. This chain is Large ribosomal subunit protein uL14, found in Hyperthermus butylicus (strain DSM 5456 / JCM 9403 / PLM1-5).